Here is a 466-residue protein sequence, read N- to C-terminus: Probable fibrosin-1 (466 aa).

Residue K8 forms a Glycyl lysine isopeptide (Lys-Gly) (interchain with G-Cter in SUMO2) linkage. Asymmetric dimethylarginine occurs at positions 229 and 239. Disordered stretches follow at residues 236-315 (AWVR…AAAA) and 410-466 (LLYS…RADR). A compositionally biased stretch (basic and acidic residues) spans 248 to 272 (GSDKERPMERREPSVTKEEKDRDLP). S281 bears the Phosphoserine mark. Over residues 288–311 (RAGEEGARPAKESVRVKEERKEEA) the composition is skewed to basic and acidic residues. Pro residues predominate over residues 442-459 (APPPLVPAPRPSSPPRAP).

The polypeptide is Probable fibrosin-1 (Fbrs) (Mus musculus (Mouse)).